We begin with the raw amino-acid sequence, 331 residues long: tRNA-cytidine(32) 2-sulfurtransferase (331 aa).

The PP-loop motif motif lies at 73–78; that stretch reads SGGKDS. [4Fe-4S] cluster is bound by residues C148, C151, and C239.

It belongs to the TtcA family. In terms of assembly, homodimer. The cofactor is Mg(2+). It depends on [4Fe-4S] cluster as a cofactor.

The protein resides in the cytoplasm. It catalyses the reaction cytidine(32) in tRNA + S-sulfanyl-L-cysteinyl-[cysteine desulfurase] + AH2 + ATP = 2-thiocytidine(32) in tRNA + L-cysteinyl-[cysteine desulfurase] + A + AMP + diphosphate + H(+). Its pathway is tRNA modification. Functionally, catalyzes the ATP-dependent 2-thiolation of cytidine in position 32 of tRNA, to form 2-thiocytidine (s(2)C32). The sulfur atoms are provided by the cysteine/cysteine desulfurase (IscS) system. This chain is tRNA-cytidine(32) 2-sulfurtransferase, found in Burkholderia mallei (strain NCTC 10247).